The sequence spans 433 residues: Phosphomethylpyrimidine synthase (433 aa).

Residues asparagine 66, methionine 94, tyrosine 123, histidine 162, 184–186, 225–228, and glutamate 264 each bind substrate; these read SRG and DALR. Zn(2+) is bound at residue histidine 268. Tyrosine 291 contacts substrate. Histidine 332 provides a ligand contact to Zn(2+). [4Fe-4S] cluster is bound by residues cysteine 408, cysteine 411, and cysteine 415.

The protein belongs to the ThiC family. The cofactor is [4Fe-4S] cluster.

It catalyses the reaction 5-amino-1-(5-phospho-beta-D-ribosyl)imidazole + S-adenosyl-L-methionine = 4-amino-2-methyl-5-(phosphooxymethyl)pyrimidine + CO + 5'-deoxyadenosine + formate + L-methionine + 3 H(+). It functions in the pathway cofactor biosynthesis; thiamine diphosphate biosynthesis. Its function is as follows. Catalyzes the synthesis of the hydroxymethylpyrimidine phosphate (HMP-P) moiety of thiamine from aminoimidazole ribotide (AIR) in a radical S-adenosyl-L-methionine (SAM)-dependent reaction. In Saccharolobus islandicus (strain M.14.25 / Kamchatka #1) (Sulfolobus islandicus), this protein is Phosphomethylpyrimidine synthase.